The sequence spans 1384 residues: Enhancer of mRNA-decapping protein 4 (1384 aa).

4 WD repeats span residues 171-211, 227-274, 292-331, and 340-390; these read GFTG…SKIQ, NSNR…SNNS, GHAA…QDQP, and HNGQ…CLQT. Disordered regions lie at residues 471-494, 551-584, and 796-931; these read TEVL…TSES, AMSS…SPAP, and AGAA…MSTE. The segment covering 482–494 has biased composition (polar residues); the sequence is SMTAEGNQGTSES. Over residues 834 to 844 the composition is skewed to basic and acidic residues; it reads CSREEIKDRHI. 2 stretches are compositionally biased toward polar residues: residues 854 to 866 and 918 to 931; these read HLTQ…ASAE and SSQS…MSTE. The stretch at 930-1012 forms a coiled coil; sequence TEVQDELLQM…QQLQDQLVQQ (83 aa).

This sequence belongs to the WD repeat EDC4 family.

It localises to the cytoplasm. Its subcellular location is the P-body. The protein localises to the nucleus. In terms of biological role, in the process of mRNA degradation, seems to play a role in mRNA decapping. The polypeptide is Enhancer of mRNA-decapping protein 4 (edc4) (Danio rerio (Zebrafish)).